The sequence spans 694 residues: Pentatricopeptide repeat-containing protein At3g12770 (694 aa).

13 PPR repeats span residues 52 to 82 (SGFL…LPRP), 83 to 117 (QIFP…RVSP), 118 to 152 (DSFT…GFDA), 153 to 183 (DVFV…LPLP), 186 to 220 (TIVS…DVKP), 221 to 255 (DWVA…GLEI), 256 to 286 (EPDL…MKSP), 287 to 321 (NLIL…DVRP), 322 to 356 (DTIS…DYRD), 357 to 387 (DVFI…TLDR), 388 to 422 (DVVV…GVHP), 423 to 457 (NDVT…KINP), and 458 to 488 (QQQH…MPVQ). The type E motif stretch occupies residues 493–568 (VWGALLSACK…DVGCSWVEVR (76 aa)). Residues 569–599 (GRLEAFRVGDKSHPRYEEIERQVEWIESRLK) form a type E(+) motif region. Residues 600–694 (EGGFVANKDA…DGVCSCGDYW (95 aa)) form a type DYW motif region.

The protein belongs to the PPR family. PCMP-H subfamily.

This Arabidopsis thaliana (Mouse-ear cress) protein is Pentatricopeptide repeat-containing protein At3g12770 (PCMP-H43).